The chain runs to 115 residues: uncharacterized protein (115 aa).

The MSP domain occupies 1–115 (MGVEISLDPP…ETVIKLSAAE (115 aa)).

This is an uncharacterized protein from Caenorhabditis elegans.